The sequence spans 138 residues: Cysteine desulfuration protein SufE (138 aa).

Cysteine 51 serves as the catalytic Cysteine persulfide intermediate.

It belongs to the SufE family. As to quaternary structure, homodimer. Interacts with SufS.

Its subcellular location is the cytoplasm. The protein operates within cofactor biosynthesis; iron-sulfur cluster biosynthesis. Participates in cysteine desulfuration mediated by SufS. Cysteine desulfuration mobilizes sulfur from L-cysteine to yield L-alanine and constitutes an essential step in sulfur metabolism for biosynthesis of a variety of sulfur-containing biomolecules. Functions as a sulfur acceptor for SufS, by mediating the direct transfer of the sulfur atom from the S-sulfanylcysteine of SufS, an intermediate product of cysteine desulfuration process. The sequence is that of Cysteine desulfuration protein SufE from Salmonella choleraesuis (strain SC-B67).